A 264-amino-acid polypeptide reads, in one-letter code: 3-methyl-2-oxobutanoate hydroxymethyltransferase (264 aa).

Residues D45 and D84 each coordinate Mg(2+). Residues 45–46 (DS), D84, and K112 contribute to the 3-methyl-2-oxobutanoate site. A Mg(2+)-binding site is contributed by E114. The active-site Proton acceptor is the E181.

The protein belongs to the PanB family. As to quaternary structure, homodecamer; pentamer of dimers. Mg(2+) is required as a cofactor.

It localises to the cytoplasm. The catalysed reaction is 3-methyl-2-oxobutanoate + (6R)-5,10-methylene-5,6,7,8-tetrahydrofolate + H2O = 2-dehydropantoate + (6S)-5,6,7,8-tetrahydrofolate. It functions in the pathway cofactor biosynthesis; (R)-pantothenate biosynthesis; (R)-pantoate from 3-methyl-2-oxobutanoate: step 1/2. In terms of biological role, catalyzes the reversible reaction in which hydroxymethyl group from 5,10-methylenetetrahydrofolate is transferred onto alpha-ketoisovalerate to form ketopantoate. In Vibrio parahaemolyticus serotype O3:K6 (strain RIMD 2210633), this protein is 3-methyl-2-oxobutanoate hydroxymethyltransferase.